A 108-amino-acid polypeptide reads, in one-letter code: Small ribosomal subunit protein bS16 (108 aa).

Belongs to the bacterial ribosomal protein bS16 family.

The polypeptide is Small ribosomal subunit protein bS16 (Orientia tsutsugamushi (strain Boryong) (Rickettsia tsutsugamushi)).